The sequence spans 570 residues: Grayanic acid biosynthesis cluster cytochrome P450 monooxygenase (570 aa).

The chain crosses the membrane as a helical span at residues 9–29 (ILTIFWLPIAAAXLYGAGLAI). Residue asparagine 191 is glycosylated (N-linked (GlcNAc...) asparagine). Residue cysteine 510 coordinates heme.

It belongs to the cytochrome P450 family. It depends on heme as a cofactor.

Its subcellular location is the membrane. Its pathway is secondary metabolite biosynthesis. In terms of biological role, non-reducing polyketide synthase; part of the gene cluster that mediates the biosynthesis of orcinol depsidone grayanic acid (GRA), the only major secondary metabolite known in C.grayi. The first step consists in the ring and depside synthesis by PKS16 leading to 4-O-demethylsphaerophorin, involving different orcinol-like rings, one with acetyl CoA and the other with octanoyl CoA as the starter. Further depsidone formation by the GRA cluster-specific cytochrome P450 leads to 4-O-demethylgrayanic acid. Finally, the cluster specific O-methyltransferase probably converts the 4-O-demethylgrayanic acid into grayanic acid. In Cladonia grayi (Gray's cup lichen), this protein is Grayanic acid biosynthesis cluster cytochrome P450 monooxygenase.